The chain runs to 342 residues: N-acetyl-gamma-glutamyl-phosphate reductase (342 aa).

C146 is a catalytic residue.

It belongs to the NAGSA dehydrogenase family. Type 1 subfamily.

The protein localises to the cytoplasm. It catalyses the reaction N-acetyl-L-glutamate 5-semialdehyde + phosphate + NADP(+) = N-acetyl-L-glutamyl 5-phosphate + NADPH + H(+). The protein operates within amino-acid biosynthesis; L-arginine biosynthesis; N(2)-acetyl-L-ornithine from L-glutamate: step 3/4. In terms of biological role, catalyzes the NADPH-dependent reduction of N-acetyl-5-glutamyl phosphate to yield N-acetyl-L-glutamate 5-semialdehyde. The chain is N-acetyl-gamma-glutamyl-phosphate reductase from Thermobifida fusca (strain YX).